We begin with the raw amino-acid sequence, 503 residues long: Probable inactive beta-glucosidase 33 (503 aa).

Positions 1-30 (MATGELALVSSLFIVVVFLLLGAVAREASA) are cleaved as a signal peptide. A beta-D-glucoside is bound by residues Gln-50, His-150, and 195 to 196 (NQ). A disulfide bridge connects residues Cys-215 and Cys-223. A glycan (N-linked (GlcNAc...) asparagine) is linked at Asn-222. A beta-D-glucoside is bound by residues Tyr-339 and Glu-399. The Nucleophile role is filled by Glu-399. Asn-436 is a glycosylation site (N-linked (GlcNAc...) asparagine). Residues Trp-446, 453–454 (EF), and Phe-462 contribute to the a beta-D-glucoside site.

Belongs to the glycosyl hydrolase 1 family.

This is Probable inactive beta-glucosidase 33 (BGLU33) from Oryza sativa subsp. japonica (Rice).